Reading from the N-terminus, the 324-residue chain is Glyoxylate/hydroxypyruvate reductase B (324 aa).

Residues Arg-237 and Glu-266 contribute to the active site. Catalysis depends on His-285, which acts as the Proton donor.

It belongs to the D-isomer specific 2-hydroxyacid dehydrogenase family. GhrB subfamily. In terms of assembly, homodimer.

The protein localises to the cytoplasm. It catalyses the reaction glycolate + NADP(+) = glyoxylate + NADPH + H(+). The enzyme catalyses (R)-glycerate + NAD(+) = 3-hydroxypyruvate + NADH + H(+). It carries out the reaction (R)-glycerate + NADP(+) = 3-hydroxypyruvate + NADPH + H(+). Functionally, catalyzes the NADPH-dependent reduction of glyoxylate and hydroxypyruvate into glycolate and glycerate, respectively. In Cronobacter sakazakii (strain ATCC BAA-894) (Enterobacter sakazakii), this protein is Glyoxylate/hydroxypyruvate reductase B.